Consider the following 322-residue polypeptide: ATP-dependent 6-phosphofructokinase (322 aa).

ATP contacts are provided by residues G12, 73-74, and 103-106; these read RF and GDGT. D104 contributes to the Mg(2+) binding site. A substrate-binding site is contributed by 126–128; that stretch reads TID. The Proton acceptor role is filled by D128. Residue R155 participates in ADP binding. Substrate contacts are provided by residues R163 and 170–172; that span reads MGR. ADP is bound by residues 186-188, K212, and 214-216; these read GSE and KPS. Substrate-binding positions include E223, R245, and 251-254; that span reads HTQR.

This sequence belongs to the phosphofructokinase type A (PFKA) family. ATP-dependent PFK group I subfamily. Prokaryotic clade 'B1' sub-subfamily. As to quaternary structure, homotetramer. Mg(2+) serves as cofactor.

It is found in the cytoplasm. The catalysed reaction is beta-D-fructose 6-phosphate + ATP = beta-D-fructose 1,6-bisphosphate + ADP + H(+). It functions in the pathway carbohydrate degradation; glycolysis; D-glyceraldehyde 3-phosphate and glycerone phosphate from D-glucose: step 3/4. Its activity is regulated as follows. Allosterically activated by ADP and other diphosphonucleosides, and allosterically inhibited by phosphoenolpyruvate. Functionally, catalyzes the phosphorylation of D-fructose 6-phosphate to fructose 1,6-bisphosphate by ATP, the first committing step of glycolysis. This is ATP-dependent 6-phosphofructokinase from Mesomycoplasma hyopneumoniae (strain J / ATCC 25934 / NCTC 10110) (Mycoplasma hyopneumoniae).